Here is a 158-residue protein sequence, read N- to C-terminus: SsrA-binding protein (158 aa).

The disordered stretch occupies residues 133–158 (QLHDKRETEKKRDWNKEKGRLLRDKH).

This sequence belongs to the SmpB family.

The protein localises to the cytoplasm. Its function is as follows. Required for rescue of stalled ribosomes mediated by trans-translation. Binds to transfer-messenger RNA (tmRNA), required for stable association of tmRNA with ribosomes. tmRNA and SmpB together mimic tRNA shape, replacing the anticodon stem-loop with SmpB. tmRNA is encoded by the ssrA gene; the 2 termini fold to resemble tRNA(Ala) and it encodes a 'tag peptide', a short internal open reading frame. During trans-translation Ala-aminoacylated tmRNA acts like a tRNA, entering the A-site of stalled ribosomes, displacing the stalled mRNA. The ribosome then switches to translate the ORF on the tmRNA; the nascent peptide is terminated with the 'tag peptide' encoded by the tmRNA and targeted for degradation. The ribosome is freed to recommence translation, which seems to be the essential function of trans-translation. This Beijerinckia indica subsp. indica (strain ATCC 9039 / DSM 1715 / NCIMB 8712) protein is SsrA-binding protein.